Here is a 325-residue protein sequence, read N- to C-terminus: Brain mitochondrial carrier protein 1 (325 aa).

6 consecutive transmembrane segments (helical) span residues 38-54 (GLNW…SIVA), 112-128 (LRQA…YQSL), 145-165 (MICG…TDVL), 199-215 (GVVP…GVEL), 240-256 (VSSF…SNPV), and 298-315 (GFWP…IFFI). Solcar repeat units follow at residues 42-131 (KPFV…LKRL), 139-224 (ETLL…TKKH), and 233-323 (DTIL…LKRL).

Belongs to the mitochondrial carrier (TC 2.A.29) family. In terms of assembly, homotetramer. In terms of tissue distribution, mainly expressed in brain, particularly abundant in cortex, hippocampus thalamus, amygdala and hypothalamus. Highly expressed in heart and kidney, but not liver or lung (at protein level). In the nervous system, expressed in cortex, basal ganglia, substantia nigra, cerebellum, and spinal cord (at protein level).

Its subcellular location is the mitochondrion inner membrane. The catalysed reaction is sulfite(in) + sulfate(out) = sulfite(out) + sulfate(in). It catalyses the reaction thiosulfate(in) + sulfate(out) = thiosulfate(out) + sulfate(in). The enzyme catalyses sulfate(out) + phosphate(in) = sulfate(in) + phosphate(out). It carries out the reaction oxalate(in) + sulfate(out) = oxalate(out) + sulfate(in). The catalysed reaction is malonate(in) + sulfate(out) = malonate(out) + sulfate(in). It catalyses the reaction maleate(in) + sulfate(out) = maleate(out) + sulfate(in). The enzyme catalyses (S)-malate(in) + sulfate(out) = (S)-malate(out) + sulfate(in). It carries out the reaction (3S)-citramalate(in) + sulfate(out) = (3S)-citramalate(out) + sulfate(in). The catalysed reaction is (3R)-citramalate(in) + sulfate(out) = (3R)-citramalate(out) + sulfate(in). It catalyses the reaction sulfate(out) + succinate(in) = sulfate(in) + succinate(out). The enzyme catalyses (S,S)-tartrate(in) + sulfate(out) = (S,S)-tartrate(out) + sulfate(in). It carries out the reaction (2R,3R)-tartrate(in) + sulfate(out) = (2R,3R)-tartrate(out) + sulfate(in). The catalysed reaction is D-aspartate(in) + sulfate(out) = D-aspartate(out) + sulfate(in). It catalyses the reaction L-aspartate(in) + sulfate(out) = L-aspartate(out) + sulfate(in). The enzyme catalyses sulfate(in) = sulfate(out). It carries out the reaction phosphate(in) = phosphate(out). The catalysed reaction is (S)-malate(out) = (S)-malate(in). It catalyses the reaction citrate(in) = citrate(out). The enzyme catalyses L-aspartate(out) = L-aspartate(in). It carries out the reaction L-glutamate(out) = L-glutamate(in). The catalysed reaction is H(+)(in) = H(+)(out). It catalyses the reaction chloride(in) = chloride(out). In terms of biological role, transports inorganic anions (sulfate, sulfite, thiosulfate and phosphate) and, to a lesser extent, a variety of dicarboxylates (e.g. malonate, malate and citramalate) and, even more so, aspartate and glutamate and tricarboxylates. May catalyze the export of sulfite and thiosulfate (the hydrogen sulfide degradation products) from the mitochondria, thereby modulating the level of the hydrogen sulfide. Also can mediate a very low unidirectional transport of anions including sulfate, phosphate, (S)-malate, citrate, L-aspartate and L-glutamate. Maintains oxidative balance (through uncoupling activities) and ATP production (by modifying mitochondrial membrane potential). Is able to transport protons across lipid membranes. Also exhibits transmembrane chloride transport activity to a lesser extent. May modify mitochondrial respiratory efficiency and mitochondrial oxidant production. The chain is Brain mitochondrial carrier protein 1 from Mus musculus (Mouse).